A 492-amino-acid polypeptide reads, in one-letter code: Probable malate:quinone oxidoreductase 1 (492 aa).

This sequence belongs to the MQO family. FAD serves as cofactor.

The catalysed reaction is (S)-malate + a quinone = a quinol + oxaloacetate. It participates in carbohydrate metabolism; tricarboxylic acid cycle; oxaloacetate from (S)-malate (quinone route): step 1/1. The sequence is that of Probable malate:quinone oxidoreductase 1 from Staphylococcus aureus (strain MW2).